Consider the following 783-residue polypeptide: MNTTTYIGDCRISFFNISSQGFWDNLKSPDVVFGYSLPLLEIQIILIFFCIVMSHMFLRCIGISQIASYMIAGIVLGPQLFDVLEKSSGKLSVDPALDGIAALRCISVFGTLMFTFLMTVRTSRRVAFHSGKLPVVIGIVSFFAPLFGLGFQNFFSDNIDPHYMPLTKALGERTAIVITQSSILLPSTTYILLELKIINSELGRLALSACVINDILGIFSMIVASIQATYIHVSHATAYRDTVAVIIFFLVVFLVFKPMVQWVIDRTPEDKPVEDMYIHAVIITALASAAYFVFFNMKYILGPLMIGIIIPEGPPLGSALEAKFERLTMNVFLPISITFSAMRCDGARILSQFNDIFFNIFLTFLILVIKLVACLAPCLYYKLPLSESLAVSFILSYKSFADFVLYEAVLDDTYISQATYSFLILYSLLNAGIVPTVLRRMYDPRRKYVNYQKRDILHLERNSDLRILTCLHKPENVSETIAFLQLLSSPNLDFPIAVTVLHLVKLVGQINPIIVSHDKKLKRLNKDSYIHTANLAFRQFVLESLESVTVTTFTAFSHENLMHEDICTLALDKTTSMIVVPSGRKWTVDGLFESDNTAIRHLNQSLLDRAPCSIGILVDRGQFSRKSIVTSKKRYIIDVGVLFIGGKDDREALSLVKRMKNNPRIRVTVIRLVFDHEIESDWDYILDNEGLKDLKSTEDNKDIDYIERIVTSSVEVVKAVQLLAEEYDLMVVGRDHDMTSQDLSGLMEWVELPELGVIGDLLAARDLSSKVSVLVVQQQQQRT.

The next 12 membrane-spanning stretches (helical) occupy residues 31 to 51 (VVFG…FFCI), 61 to 81 (IGIS…PQLF), 100 to 120 (IAAL…LMTV), 135 to 155 (VVIG…QNFF), 175 to 195 (AIVI…LLEL), 206 to 226 (ALSA…VASI), 244 to 264 (AVII…QWVI), 276 to 295 (MYIH…FVFF), 300 to 322 (ILGP…ALEA), 356 to 376 (IFFN…ACLA), 389 to 409 (LAVS…YEAV), and 418 to 438 (ATYS…PTVL).

It belongs to the monovalent cation:proton antiporter 2 (CPA2) transporter (TC 2.A.37) family. CHX (TC 2.A.37.4) subfamily. As to expression, specifically expressed in pollen.

It is found in the membrane. In terms of biological role, may operate as a cation/H(+) antiporter. The polypeptide is Cation/H(+) antiporter 10 (CHX10) (Arabidopsis thaliana (Mouse-ear cress)).